Consider the following 449-residue polypeptide: Adenosylhomocysteinase (449 aa).

The residue at position 2 (serine 2) is an N-acetylserine. A Glycyl lysine isopeptide (Lys-Gly) (interchain with G-Cter in ubiquitin) cross-link involves residue lysine 21. Substrate-binding residues include threonine 58, aspartate 134, and glutamate 159. NAD(+) is bound at residue 160–162; it reads TTT. 2 residues coordinate substrate: lysine 189 and aspartate 193. NAD(+)-binding positions include asparagine 194, 223-228, glutamate 246, 302-304, and asparagine 349; these read GYGDVG and IGH. At threonine 393 the chain carries Phosphothreonine. Lysine 413 participates in a covalent cross-link: Glycyl lysine isopeptide (Lys-Gly) (interchain with G-Cter in ubiquitin).

Belongs to the adenosylhomocysteinase family. It depends on NAD(+) as a cofactor.

The enzyme catalyses S-adenosyl-L-homocysteine + H2O = L-homocysteine + adenosine. The protein operates within amino-acid biosynthesis; L-homocysteine biosynthesis; L-homocysteine from S-adenosyl-L-homocysteine: step 1/1. Its function is as follows. Adenosylhomocysteine is a competitive inhibitor of S-adenosyl-L-methionine-dependent methyl transferase reactions; therefore adenosylhomocysteinase may play a key role in the control of methylations via regulation of the intracellular concentration of adenosylhomocysteine. This Saccharomyces cerevisiae (strain ATCC 204508 / S288c) (Baker's yeast) protein is Adenosylhomocysteinase (SAH1).